The primary structure comprises 112 residues: uncharacterized protein (112 aa).

Residues cysteine 39, cysteine 105, and cysteine 107 each contribute to the Fe cation site.

This sequence belongs to the HesB/IscA family. Ycf83 subfamily.

It is found in the plastid. It localises to the chloroplast. This is an uncharacterized protein from Galdieria sulphuraria (Red alga).